A 68-amino-acid polypeptide reads, in one-letter code: ATP synthase protein 8 (68 aa).

Residues Val8–Met24 form a helical membrane-spanning segment. Position 54 is an N6-acetyllysine; alternate (Lys54). Lys54 carries the post-translational modification N6-succinyllysine; alternate. The residue at position 57 (Lys57) is an N6-acetyllysine.

The protein belongs to the ATPase protein 8 family. As to quaternary structure, F-type ATPases have 2 components, CF(1) - the catalytic core - and CF(0) - the membrane proton channel. Component of an ATP synthase complex composed of ATP5PB, ATP5MC1, ATP5F1E, ATP5PD, ATP5ME, ATP5PF, ATP5MF, MT-ATP6, MT-ATP8, ATP5F1A, ATP5F1B, ATP5F1D, ATP5F1C, ATP5PO, ATP5MG, ATP5MK and ATP5MJ. Interacts with PRICKLE3.

It localises to the mitochondrion membrane. Mitochondrial membrane ATP synthase (F(1)F(0) ATP synthase or Complex V) produces ATP from ADP in the presence of a proton gradient across the membrane which is generated by electron transport complexes of the respiratory chain. F-type ATPases consist of two structural domains, F(1) - containing the extramembraneous catalytic core and F(0) - containing the membrane proton channel, linked together by a central stalk and a peripheral stalk. During catalysis, ATP synthesis in the catalytic domain of F(1) is coupled via a rotary mechanism of the central stalk subunits to proton translocation. Part of the complex F(0) domain. Minor subunit located with subunit a in the membrane. This Hylobates lar (Lar gibbon) protein is ATP synthase protein 8 (MT-ATP8).